The primary structure comprises 716 residues: Fatty acid oxidation complex subunit alpha (716 aa).

Residues 1 to 189 are enoyl-CoA hydratase/isomerase; the sequence is MIYQSPTIQV…KVGAVDAVVA (189 aa). Substrate is bound at residue aspartate 296. The interval 311–716 is 3-hydroxyacyl-CoA dehydrogenase; sequence KEVNNAAVLG…AANNGSYYQA (406 aa). NAD(+) contacts are provided by residues methionine 324, aspartate 343, 400–402, lysine 407, and serine 429; that span reads VVE. Catalysis depends on histidine 450, which acts as the For 3-hydroxyacyl-CoA dehydrogenase activity. Asparagine 453 is a binding site for NAD(+). Positions 500 and 660 each coordinate substrate.

It in the N-terminal section; belongs to the enoyl-CoA hydratase/isomerase family. This sequence in the C-terminal section; belongs to the 3-hydroxyacyl-CoA dehydrogenase family. In terms of assembly, heterotetramer of two alpha chains (FadB) and two beta chains (FadA).

The catalysed reaction is a (3S)-3-hydroxyacyl-CoA + NAD(+) = a 3-oxoacyl-CoA + NADH + H(+). It carries out the reaction a (3S)-3-hydroxyacyl-CoA = a (2E)-enoyl-CoA + H2O. It catalyses the reaction a 4-saturated-(3S)-3-hydroxyacyl-CoA = a (3E)-enoyl-CoA + H2O. The enzyme catalyses (3S)-3-hydroxybutanoyl-CoA = (3R)-3-hydroxybutanoyl-CoA. The catalysed reaction is a (3Z)-enoyl-CoA = a 4-saturated (2E)-enoyl-CoA. It carries out the reaction a (3E)-enoyl-CoA = a 4-saturated (2E)-enoyl-CoA. It participates in lipid metabolism; fatty acid beta-oxidation. Its function is as follows. Involved in the aerobic and anaerobic degradation of long-chain fatty acids via beta-oxidation cycle. Catalyzes the formation of 3-oxoacyl-CoA from enoyl-CoA via L-3-hydroxyacyl-CoA. It can also use D-3-hydroxyacyl-CoA and cis-3-enoyl-CoA as substrate. The polypeptide is Fatty acid oxidation complex subunit alpha (Shewanella baltica (strain OS223)).